A 345-amino-acid chain; its full sequence is Selenide, water dikinase (345 aa).

Cysteine 16 is an active-site residue. Residues lysine 19 and 46–48 (TSD) each bind ATP. Aspartate 49 is a Mg(2+) binding site. ATP contacts are provided by residues aspartate 66, aspartate 89, and 136-138 (GHT). Position 89 (aspartate 89) interacts with Mg(2+). Residue aspartate 224 participates in Mg(2+) binding.

This sequence belongs to the selenophosphate synthase 1 family. Class I subfamily. Homodimer. Mg(2+) is required as a cofactor.

It catalyses the reaction hydrogenselenide + ATP + H2O = selenophosphate + AMP + phosphate + 2 H(+). Functionally, synthesizes selenophosphate from selenide and ATP. The chain is Selenide, water dikinase from Clostridium botulinum (strain Alaska E43 / Type E3).